Here is a 250-residue protein sequence, read N- to C-terminus: ATP synthase subunit a (250 aa).

6 helical membrane passes run 26-46 (FTNA…FLYL), 84-104 (FFPM…LGMF), 114-134 (IIVT…YGFY), 143-163 (LFVP…IEVI), 193-213 (FVAS…LPLI), and 216-236 (VALT…FAVL).

The protein belongs to the ATPase A chain family. As to quaternary structure, F-type ATPases have 2 components, CF(1) - the catalytic core - and CF(0) - the membrane proton channel. CF(1) has five subunits: alpha(3), beta(3), gamma(1), delta(1), epsilon(1). CF(0) has three main subunits: a(1), b(2) and c(9-12). The alpha and beta chains form an alternating ring which encloses part of the gamma chain. CF(1) is attached to CF(0) by a central stalk formed by the gamma and epsilon chains, while a peripheral stalk is formed by the delta and b chains.

Its subcellular location is the cell inner membrane. In terms of biological role, key component of the proton channel; it plays a direct role in the translocation of protons across the membrane. In Sinorhizobium fredii (strain NBRC 101917 / NGR234), this protein is ATP synthase subunit a.